Here is a 434-residue protein sequence, read N- to C-terminus: MTDFSPREIVSELDRYIVGQADAKRAVSIALRNRWRRLQLDAGLREEVLPKNILMIGPTGVGKTEIARRLAKLAGAPFLKVEATKFTEVGYVGRDVEQIIRDLVEVAIVQVRERKRKDVAARAQLAAEERVLDALVGANSSAATRDSFRRKLRAGELNDKEIEIETQSSGGGFPMFEIPGMPGAQMGAISIGDIFGKLGGRTKTRRVTVESSHDILIAEESDKLLDNDQLVQEAISVVENNGIVFLDEIDKICVRENRHGGDVSREGVQRDLLPLIEGTTVSTKHGAVKTDHILFIASGAFHIAKPSDLLPELQGRLPIRVELQALTRDDMRRILTEPEASLIKQYVALMKTEGVTLDITDDAIDALADIAVAVNSTVENIGARRLQTVMERVLDEISFTASDRSGETMRVDAAYVQQHIGDLAKNADLSRFIL.

ATP is bound by residues Val-18, 60–65 (GVGKTE), Asp-247, Glu-312, and Arg-384.

Belongs to the ClpX chaperone family. HslU subfamily. As to quaternary structure, a double ring-shaped homohexamer of HslV is capped on each side by a ring-shaped HslU homohexamer. The assembly of the HslU/HslV complex is dependent on binding of ATP.

The protein localises to the cytoplasm. Its function is as follows. ATPase subunit of a proteasome-like degradation complex; this subunit has chaperone activity. The binding of ATP and its subsequent hydrolysis by HslU are essential for unfolding of protein substrates subsequently hydrolyzed by HslV. HslU recognizes the N-terminal part of its protein substrates and unfolds these before they are guided to HslV for hydrolysis. This Bradyrhizobium sp. (strain BTAi1 / ATCC BAA-1182) protein is ATP-dependent protease ATPase subunit HslU.